The primary structure comprises 316 residues: Ribosomal RNA small subunit methyltransferase H (316 aa).

S-adenosyl-L-methionine is bound by residues 35-37, aspartate 55, phenylalanine 84, aspartate 105, and glutamine 112; that span reads AGH.

The protein belongs to the methyltransferase superfamily. RsmH family.

It is found in the cytoplasm. The enzyme catalyses cytidine(1402) in 16S rRNA + S-adenosyl-L-methionine = N(4)-methylcytidine(1402) in 16S rRNA + S-adenosyl-L-homocysteine + H(+). Specifically methylates the N4 position of cytidine in position 1402 (C1402) of 16S rRNA. The protein is Ribosomal RNA small subunit methyltransferase H of Streptococcus pneumoniae (strain 70585).